The following is a 254-amino-acid chain: Ribosomal RNA small subunit methyltransferase G (254 aa).

Residues glycine 84, phenylalanine 89, 136–137, and arginine 155 each bind S-adenosyl-L-methionine; that span reads VE.

The protein belongs to the methyltransferase superfamily. RNA methyltransferase RsmG family.

The protein resides in the cytoplasm. In terms of biological role, specifically methylates the N7 position of a guanine in 16S rRNA. This Synechococcus sp. (strain CC9311) protein is Ribosomal RNA small subunit methyltransferase G.